A 249-amino-acid chain; its full sequence is Isoamyl acetate-hydrolyzing esterase 1 homolog (249 aa).

Catalysis depends on S24, which acts as the Nucleophile. At K63 the chain carries N6-succinyllysine. The Proton donor role is filled by D197. The Proton acceptor role is filled by H200.

The protein belongs to the 'GDSL' lipolytic enzyme family. IAH1 subfamily.

In terms of biological role, probable lipase. The chain is Isoamyl acetate-hydrolyzing esterase 1 homolog (Iah1) from Mus musculus (Mouse).